The chain runs to 485 residues: Poly(ADP-ribose) glycohydrolase 2 (485 aa).

Belongs to the poly(ADP-ribose) glycohydrolase family. In terms of tissue distribution, expressed in head and tail neurons.

It is found in the cytoplasm. It carries out the reaction [(1''-&gt;2')-ADP-alpha-D-ribose](n) + H2O = [(1''-&gt;2')-ADP-alpha-D-ribose](n-1) + ADP-D-ribose. In terms of biological role, poly(ADP-ribose) synthesized after DNA damage is only present transiently and is rapidly degraded by poly(ADP-ribose) glycohydrolase. Poly(ADP-ribose) metabolism may be required for maintenance of the normal function of neuronal cells. The polypeptide is Poly(ADP-ribose) glycohydrolase 2 (Caenorhabditis elegans).